The following is a 1276-amino-acid chain: Sterol regulatory element-binding protein cleavage-activating protein (1276 aa).

Residues methionine 1–histidine 18 are Cytoplasmic-facing. The helical transmembrane segment at glycine 19–alanine 39 threads the bilayer. The Lumenal segment spans residues cysteine 40–glutamate 279. The segment at lysine 46 to glutamate 284 is loop-1. Residues proline 60–glutamine 81 are disordered. Asparagine 263 carries N-linked (GlcNAc...) asparagine glycosylation. A helical membrane pass occupies residues isoleucine 280–tyrosine 300. Residues glutamate 284–isoleucine 442 enclose the SSD domain. Over phenylalanine 301 to lysine 312 the chain is Cytoplasmic. The helical transmembrane segment at tryptophan 313 to leucine 333 threads the bilayer. The Lumenal segment spans residues cysteine 334 to asparagine 344. The helical transmembrane segment at glycine 345 to threonine 365 threads the bilayer. Residues lysine 366–glycine 401 lie on the Cytoplasmic side of the membrane. Residues isoleucine 402 to valine 422 traverse the membrane as a helical segment. Valine 423 is a topological domain (lumenal). The helical transmembrane segment at glycine 424–isoleucine 444 threads the bilayer. Residues arginine 445–arginine 518 lie on the Cytoplasmic side of the membrane. An ER export signal motif is present at residues methionine 447 to leucine 452. Glycyl lysine isopeptide (Lys-Gly) (interchain with G-Cter in ubiquitin) cross-links involve residues lysine 454 and lysine 466. A helical membrane pass occupies residues leucine 519 to leucine 539. The loop-7 stretch occupies residues aspartate 535–lysine 710. Residues arginine 540–leucine 708 are Lumenal-facing. N-linked (GlcNAc...) asparagine glycosylation is found at asparagine 590 and asparagine 641. A helical transmembrane segment spans residues tyrosine 709–leucine 729. Residues tyrosine 730 to aspartate 1276 are Cytoplasmic-facing. The interaction with SREBF2 stretch occupies residues arginine 731–aspartate 1276. The WD 1 repeat unit spans residues valine 771–arginine 811. Residues glycine 816–arginine 903 form a disordered region. Serine 821, serine 837, serine 843, serine 850, serine 905, and serine 934 each carry phosphoserine. Residues proline 928–leucine 957 form a disordered region. 2 WD repeats span residues alanine 949–serine 999 and glutamate 1002–proline 1039. Arginine 1048 carries the omega-N-methylarginine modification. WD repeat units follow at residues alanine 1074–threonine 1111, glycine 1114–histidine 1152, alanine 1155–serine 1192, and glutamine 1194–threonine 1232.

This sequence belongs to the WD repeat SCAP family. In terms of assembly, membrane region forms a homotetramer. Component of the SCAP-SREBP complex (composed of SCAP and SREBF1/SREBP1 or SREBF2/SREBP2); interacts with SREBF1/SREBP1 or SREBF2/SREBP2 through its C-terminal cytoplasmic domain. Forms a ternary complex with INSIG1 or INSIG2 through its transmembrane domains at high sterol concentrations. Interacts with PAQR3; the interaction anchors the SCAP-SREBP complex to the Golgi apparatus in low cholesterol conditions. Interacts with the SEC23-SEC24 complex in a SAR1-GTP-dependent manner through an ER export signal in its third cytoplasmic loop. Interacts with RNF139; the interaction inhibits the interaction of SCAP with SEC24B and hampering the ER to Golgi transport of the SCAP-SREBP complex. Interacts with SPRING. Post-translationally, ubiquitinated at Lys-454 and Lys-466. RNF145 triggers ubiquitination of SCAP, likely inhibiting SCAP-SREBP complex transport to the Golgi apparatus and the subsequent processing/maturation of SREBF2/SREBP2.

Its subcellular location is the endoplasmic reticulum membrane. It is found in the golgi apparatus membrane. The protein localises to the cytoplasmic vesicle. The protein resides in the COPII-coated vesicle membrane. Its function is as follows. Escort protein required for cholesterol as well as lipid homeostasis. Regulates export of the SCAP-SREBP complex from the endoplasmic reticulum to the Golgi upon low cholesterol, thereby regulating the processing of sterol regulatory element-binding proteins (SREBPs) SREBF1/SREBP1 and SREBF2/SREBP2. At high sterol concentrations, formation of a ternary complex with INSIG (INSIG1 or INSIG2) leads to mask the ER export signal in SCAP, promoting retention of the complex in the endoplasmic reticulum. Low sterol concentrations trigger release of INSIG, a conformational change in the SSD domain of SCAP, unmasking of the ER export signal, promoting recruitment into COPII-coated vesicles and transport of the SCAP-SREBP to the Golgi: in the Golgi, SREBPs are then processed, releasing the transcription factor fragment of SREBPs from the membrane, its import into the nucleus and up-regulation of LDLR, INSIG1 and the mevalonate pathway. Binds cholesterol via its SSD domain. This is Sterol regulatory element-binding protein cleavage-activating protein from Cricetulus griseus (Chinese hamster).